A 180-amino-acid chain; its full sequence is O-acetyl-ADP-ribose deacetylase (180 aa).

The Macro domain occupies 1-175 (MKPQIDVIHG…LYQRLLTQRG (175 aa)). Residues 11-12 (DI), N25, 33-35 (GVD), and 122-126 (STGVY) each bind substrate. Residue D35 is the Proton acceptor of the active site.

It belongs to the MacroD-type family. YmdB subfamily. In terms of assembly, homodimer. Interacts with RNase III.

The catalysed reaction is 3''-O-acetyl-ADP-D-ribose + H2O = ADP-D-ribose + acetate + H(+). It catalyses the reaction 2''-O-acetyl-ADP-D-ribose + H2O = ADP-D-ribose + acetate + H(+). Its function is as follows. Deacetylates O-acetyl-ADP ribose to yield ADP-ribose and free acetate. Down-regulates ribonuclease 3 (RNase III) activity. Acts by interacting directly with the region of the ribonuclease that is required for dimerization/activation. This Enterobacter cloacae subsp. cloacae (strain ATCC 13047 / DSM 30054 / NBRC 13535 / NCTC 10005 / WDCM 00083 / NCDC 279-56) protein is O-acetyl-ADP-ribose deacetylase.